The following is a 1094-amino-acid chain: Probable serine/threonine-protein kinase kinX (1094 aa).

A Protein kinase domain is found at 22 to 281 (LDFISEIGSG…QTLKQIKTTL (260 aa)). ATP-binding positions include 28-36 (IGSGGFGKV) and Lys49. Asp146 acts as the Proton acceptor in catalysis. 2 disordered regions span residues 301-884 (TTNG…SVED) and 946-1083 (IKVE…PNNK). The segment covering 330–344 (YDDDDDDDDDDDDND) has biased composition (acidic residues). Positions 351–373 (SDNSNSNVTLESNSNYNSSTING) are enriched in polar residues. Positions 374–387 (QEQQEQQEQQQQQQ) are enriched in low complexity. Residues 393–408 (DEGEIEQDDDNIEVYD) are compositionally biased toward acidic residues. Basic and acidic residues predominate over residues 410-424 (DYQKKLEEHQKELLE). 3 stretches are compositionally biased toward acidic residues: residues 433–454 (STDE…EEEQ), 480–496 (DDED…EGDE), and 503–523 (DFDE…DEDE). 2 stretches are compositionally biased toward low complexity: residues 526 to 542 (IQYY…LQKQ) and 564 to 585 (RQLQ…QHQQ). The segment covering 587 to 602 (YDDDDDDDDEEEEEYD) has biased composition (acidic residues). Over residues 603 to 639 (DVIRHDTDSEEESKDKTPLPWDQHFEKQKESENKVEQ) the composition is skewed to basic and acidic residues. Residues 650–661 (QETEQQQQQQQQ) show a composition bias toward low complexity. The segment covering 670 to 801 (PTKVEDVKVE…EPVEEVKVEE (132 aa)) has biased composition (basic and acidic residues). A 40 X 9 AA approximate repeats of V-K-V-E-E-P-V-E-E region spans residues 676 to 978 (VKVETEEQTK…PVKVEVASPV (303 aa)). Acidic residues predominate over residues 802–816 (PVEEVEAEESVQEPV). Basic and acidic residues-rich tracts occupy residues 817-884 (EEVK…SVED) and 946-971 (IKVE…EPVK). 2 stretches are compositionally biased toward low complexity: residues 972–985 (VEVA…QPPQ) and 992–1011 (VVST…SNSP). Residues 1016 to 1031 (VKQPQQQEIEVNSTPI) show a composition bias toward polar residues. Residues 1032-1050 (KQQQQQQQTPTQQTQTPTK) show a composition bias toward low complexity.

This sequence belongs to the protein kinase superfamily. TKL Ser/Thr protein kinase family.

It carries out the reaction L-seryl-[protein] + ATP = O-phospho-L-seryl-[protein] + ADP + H(+). The enzyme catalyses L-threonyl-[protein] + ATP = O-phospho-L-threonyl-[protein] + ADP + H(+). The polypeptide is Probable serine/threonine-protein kinase kinX (kinX) (Dictyostelium discoideum (Social amoeba)).